The primary structure comprises 155 residues: Transcriptional regulator MraZ (155 aa).

SpoVT-AbrB domains follow at residues T7–E54 and V83–K126.

This sequence belongs to the MraZ family. Forms oligomers.

It localises to the cytoplasm. The protein localises to the nucleoid. This chain is Transcriptional regulator MraZ, found in Christiangramia forsetii (strain DSM 17595 / CGMCC 1.15422 / KT0803) (Gramella forsetii).